A 414-amino-acid chain; its full sequence is MIDLKYLQNNFNEVSMKLQKKGVDAASLEHLQTLFKTLKEANAKLEAAKAEQNSMSKLFGQYKREGKDITELKAKVDANKEAMVPLQEAAREAEEALYAVALAIPNLPDDSVPEGADEEDNVELIKVLEPRSFDFEPKEHWDLAEKNGWIDFERGVKLAKSRFSVLRGDAARLERALINFFLDTNRERGFEEFCVPFMNNAAMLQGTGQLPKFEDDLFKIEDEDLYLIPTAEVPLTNMYHDEILAEIDLPVLMTGYTPCFRKEAGSAGRDTRGMIRQHQFDKVEMVAIAHPDNSDEVFDMMVQNASDILTALGLPHRVVELCGGDLGFSAAKTIDLEVWLPGQNKYREISSISNTRDFQARRAKIRFKDGKKNRLVHTLNGSALAVGRTLIAIMENYQNEDGTIEIPEVLKKYM.

230–232 contacts L-serine; the sequence is TAE. Residue 261 to 263 coordinates ATP; sequence RKE. Residue Glu-284 participates in L-serine binding. 348 to 351 provides a ligand contact to ATP; sequence EISS. Ser-382 serves as a coordination point for L-serine.

This sequence belongs to the class-II aminoacyl-tRNA synthetase family. Type-1 seryl-tRNA synthetase subfamily. As to quaternary structure, homodimer. The tRNA molecule binds across the dimer.

The protein localises to the cytoplasm. It catalyses the reaction tRNA(Ser) + L-serine + ATP = L-seryl-tRNA(Ser) + AMP + diphosphate + H(+). The enzyme catalyses tRNA(Sec) + L-serine + ATP = L-seryl-tRNA(Sec) + AMP + diphosphate + H(+). The protein operates within aminoacyl-tRNA biosynthesis; selenocysteinyl-tRNA(Sec) biosynthesis; L-seryl-tRNA(Sec) from L-serine and tRNA(Sec): step 1/1. Functionally, catalyzes the attachment of serine to tRNA(Ser). Is also able to aminoacylate tRNA(Sec) with serine, to form the misacylated tRNA L-seryl-tRNA(Sec), which will be further converted into selenocysteinyl-tRNA(Sec). The polypeptide is Serine--tRNA ligase (Sulfurovum sp. (strain NBC37-1)).